The following is a 183-amino-acid chain: Bifunctional protein PyrR (183 aa).

Substrate is bound by residues 46 to 47 (TR), Arg87, 107 to 115 (DDVIFSGRT), Arg140, and Val164. A PRPP-binding motif is present at residues 103–115 (VVLVDDVIFSGRT).

The protein belongs to the purine/pyrimidine phosphoribosyltransferase family. PyrR subfamily.

The catalysed reaction is UMP + diphosphate = 5-phospho-alpha-D-ribose 1-diphosphate + uracil. Regulates the transcription of the pyrimidine nucleotide (pyr) operon in response to exogenous pyrimidines. Its function is as follows. Also displays a weak uracil phosphoribosyltransferase activity which is not physiologically significant. This Thermosynechococcus vestitus (strain NIES-2133 / IAM M-273 / BP-1) protein is Bifunctional protein PyrR.